Here is a 658-residue protein sequence, read N- to C-terminus: Endoglin (658 aa).

Residues M1–A25 form the signal peptide. The OR1, N-terminal part stretch occupies residues E26–T46. Residues E26–S337 form a required for interaction with GDF2 region. At E26 to G586 the chain is on the extracellular side. 7 disulfide bridges follow: C30–C207, C53–C182, C242–C330, C350–C382, C363–C442, C394–C412, and C493–C549. The OR2 stretch occupies residues S47–R199. 4 N-linked (GlcNAc...) asparagine glycosylation sites follow: N88, N102, N121, and N134. Positions T200–C330 are OR1, C-terminal part. The tract at residues Q270 to F282 is essential for interaction with GDF2. N-linked (GlcNAc...) asparagine glycosylation is present at N307. Positions C363–L533 constitute a ZP domain. The short motif at R399 to D401 is the Cell attachment site element. A helical membrane pass occupies residues L587 to W611. At Y612 to A658 the chain is on the cytoplasmic side. Residues V626 to S639 are compositionally biased toward low complexity. Residues V626–A658 form a disordered region. Over residues T640 to A658 the composition is skewed to polar residues. 2 positions are modified to phosphoserine; by TGFBR1: S646 and S649.

Homodimer; disulfide-linked. Forms a heteromeric complex with the signaling receptors for transforming growth factor-beta: TGFBR1 and/or TGFBR2. It is able to bind TGFB1 and TGFB2 with high affinity, but not TGFB3. Interacts with GDF2, forming a heterotetramer with a 2:2 stoichiometry. Interacts with ACVRL1. Can form a heteromeric complex with GDF2 and ACVRL1. Interacts with BMP10. Interacts with DYNLT4. Interacts with ARRB2. In terms of tissue distribution, detected on umbilical veil endothelial cells. Detected in placenta (at protein level). Detected on endothelial cells.

Its subcellular location is the cell membrane. Vascular endothelium glycoprotein that plays an important role in the regulation of angiogenesis. Required for normal structure and integrity of adult vasculature. Regulates the migration of vascular endothelial cells. Required for normal extraembryonic angiogenesis and for embryonic heart development. May regulate endothelial cell shape changes in response to blood flow, which drive vascular remodeling and establishment of normal vascular morphology during angiogenesis. May play a critical role in the binding of endothelial cells to integrins and/or other RGD receptors. Acts as a TGF-beta coreceptor and is involved in the TGF-beta/BMP signaling cascade that ultimately leads to the activation of SMAD transcription factors. Required for GDF2/BMP9 signaling through SMAD1 in endothelial cells and modulates TGFB1 signaling through SMAD3. The protein is Endoglin (ENG) of Homo sapiens (Human).